Here is a 343-residue protein sequence, read N- to C-terminus: NAC domain-containing protein 4 (343 aa).

An NAC domain is found at 12–168; it reads LPPGFRFHPT…EWVLCRVFKK (157 aa). Residues 109–174 mediate DNA binding; the sequence is VGMKKTLVFY…VFKKSLVEVG (66 aa). The tract at residues 304-333 is disordered; the sequence is GGERERLSASQDTGLTSDVNPEISSSSGQK. Residues 311 to 332 show a composition bias toward polar residues; sequence SASQDTGLTSDVNPEISSSSGQ.

In terms of tissue distribution, expressed in roots, tiller buds, stems, leaves, lamina joints and the young husks. Expressed in embryos, coleoptiles, radicles, leaf pulvinus, ligules, panicles, palea and lemma, anthers, and the internode of the peduncles. Expressed in young leaves, root meristems, florescence meristems and young spikelets.

The protein resides in the nucleus. In terms of biological role, transcription factor involved in the regulation of tiller bud outgrowth, but does not seem to regulate tiller bud initiation. Possesses transactivation activity in yeast. Involved in the regulation of plant architecture and grain yield. Acts as a negative regulator of plant height and flowering time. Regulates directly key genes of the gibberellin (GA) pathway by binding to their promoters. Positively regulates leaf senescence in an age-dependent manner. Activates directly the expression of the chlorophyll degradation genes SGR and NYC3. Positively regulates the level of abscisic acid (ABA) by directly up-regulating the expression of the ABA biosynthetic genes NCED3 and ZEP, and down-regulating the ABA catabolic gene CYP707A5/ABA8OX1. Promotes salt-induced cell death accompanied by the loss of plasma membrane integrity, nuclear DNA fragmentation, and changes of caspase-like activity. Targets genes that encoded a reactive oxygen species (ROS) scavenger COX11 and a caspase-like protease AP37. Activates the potassium efflux channels GORK and SKOR. Acts as a positive regulator of drought and salt tolerance through ABA-mediated pathways. Acts as a negative regulator of root growth. Functions as an upstream integrator of auxin and cytokinin signals that affect CROWN ROOTLESS (CRL) and cyclin-dependent protein kinase (CDK) genes to regulate cell division during root development. Binds directly to the promoters of the auxin inactivation-related genes GH3.6 and GH3.8, the auxin signaling-related gene ARF25, and the cytokinin oxidase gene CKX4. Activates directly the expressions of the 1-aminocyclopropane-1-carboxylate oxidase genes ACO1 and ACO3, enhancing ethylene synthesis, and then retarding seedling establishment. This is NAC domain-containing protein 4 from Oryza sativa subsp. japonica (Rice).